Reading from the N-terminus, the 307-residue chain is Transcription factor DIVARICATA (307 aa).

One can recognise an SANT domain in the interval 21 to 74 (RSTTRWTAAENKAFENALAVFDENTPNRWERVAERVPGKTVGDVMRQYKELEDD). Residues 109-133 (QSYGTGGRKSSSGRPSEQERKKGVP) are disordered. Residues 124-133 (SEQERKKGVP) show a composition bias toward basic and acidic residues. Positions 126–182 (QERKKGVPWTEEEHKLFLMGLKKYGKGDWRNISRNFVITRTPTQVASHAQKYFIRQL) constitute an HTH myb-type domain. The segment at residues 154-178 (WRNISRNFVITRTPTQVASHAQKYF) is a DNA-binding region (H-T-H motif). 2 stretches are compositionally biased toward polar residues: residues 196-206 (ITTVNLSDNQT) and 222-231 (MAQQQTSSTS). Residues 196 to 231 (ITTVNLSDNQTPSPDNKKPPSSPDHSMAQQQTSSTS) form a disordered region.

It is found in the nucleus. Functionally, involved in the dorsovental asymmetry of flowers. Promotes ventral identity. The sequence is that of Transcription factor DIVARICATA (DIVARICATA) from Antirrhinum majus (Garden snapdragon).